The primary structure comprises 173 residues: CDP-archaeol synthase (173 aa).

5 helical membrane passes run 15 to 35 (GLWF…FGGG), 59 to 79 (GFIV…LVVG), 84 to 104 (AGDG…GSFV), 118 to 138 (VLDQ…VYGW), and 142 to 162 (GWVL…TNVI).

The protein belongs to the CDP-archaeol synthase family. The cofactor is Mg(2+).

It is found in the cell membrane. The enzyme catalyses 2,3-bis-O-(geranylgeranyl)-sn-glycerol 1-phosphate + CTP + H(+) = CDP-2,3-bis-O-(geranylgeranyl)-sn-glycerol + diphosphate. It participates in membrane lipid metabolism; glycerophospholipid metabolism. Catalyzes the formation of CDP-2,3-bis-(O-geranylgeranyl)-sn-glycerol (CDP-archaeol) from 2,3-bis-(O-geranylgeranyl)-sn-glycerol 1-phosphate (DGGGP) and CTP. This reaction is the third ether-bond-formation step in the biosynthesis of archaeal membrane lipids. The polypeptide is CDP-archaeol synthase (Methanopyrus kandleri (strain AV19 / DSM 6324 / JCM 9639 / NBRC 100938)).